Here is a 78-residue protein sequence, read N- to C-terminus: Acyl carrier protein (78 aa).

Residues 1–76 (MSVAEKVKEI…DAISFIEKKK (76 aa)) form the Carrier domain. Ser36 bears the O-(pantetheine 4'-phosphoryl)serine mark.

The protein belongs to the acyl carrier protein (ACP) family. 4'-phosphopantetheine is transferred from CoA to a specific serine of apo-ACP by AcpS. This modification is essential for activity because fatty acids are bound in thioester linkage to the sulfhydryl of the prosthetic group.

The protein resides in the cytoplasm. It participates in lipid metabolism; fatty acid biosynthesis. In terms of biological role, carrier of the growing fatty acid chain in fatty acid biosynthesis. The protein is Acyl carrier protein of Solidesulfovibrio magneticus (strain ATCC 700980 / DSM 13731 / RS-1) (Desulfovibrio magneticus).